The primary structure comprises 279 residues: Bifunctional protein FolD (279 aa).

NADP(+) contacts are provided by residues 164-166 (GRS), Ser-189, and Ile-230.

Belongs to the tetrahydrofolate dehydrogenase/cyclohydrolase family. As to quaternary structure, homodimer.

It carries out the reaction (6R)-5,10-methylene-5,6,7,8-tetrahydrofolate + NADP(+) = (6R)-5,10-methenyltetrahydrofolate + NADPH. It catalyses the reaction (6R)-5,10-methenyltetrahydrofolate + H2O = (6R)-10-formyltetrahydrofolate + H(+). It participates in one-carbon metabolism; tetrahydrofolate interconversion. Functionally, catalyzes the oxidation of 5,10-methylenetetrahydrofolate to 5,10-methenyltetrahydrofolate and then the hydrolysis of 5,10-methenyltetrahydrofolate to 10-formyltetrahydrofolate. This chain is Bifunctional protein FolD, found in Agathobacter rectalis (strain ATCC 33656 / DSM 3377 / JCM 17463 / KCTC 5835 / VPI 0990) (Eubacterium rectale).